Consider the following 409-residue polypeptide: Dual-specificity RNA methyltransferase RlmN (409 aa).

The Proton acceptor role is filled by glutamate 117. In terms of domain architecture, Radical SAM core spans 128–377 (LNGRKTLCIS…CTIRQTRGDD (250 aa)). An intrachain disulfide couples cysteine 135 to cysteine 382. Residues cysteine 142, cysteine 146, and cysteine 149 each coordinate [4Fe-4S] cluster. Residues 205–206 (GE), serine 237, 259–261 (SLH), and asparagine 339 each bind S-adenosyl-L-methionine. Cysteine 382 (S-methylcysteine intermediate) is an active-site residue.

The protein belongs to the radical SAM superfamily. RlmN family. [4Fe-4S] cluster is required as a cofactor.

It is found in the cytoplasm. The enzyme catalyses adenosine(2503) in 23S rRNA + 2 reduced [2Fe-2S]-[ferredoxin] + 2 S-adenosyl-L-methionine = 2-methyladenosine(2503) in 23S rRNA + 5'-deoxyadenosine + L-methionine + 2 oxidized [2Fe-2S]-[ferredoxin] + S-adenosyl-L-homocysteine. It catalyses the reaction adenosine(37) in tRNA + 2 reduced [2Fe-2S]-[ferredoxin] + 2 S-adenosyl-L-methionine = 2-methyladenosine(37) in tRNA + 5'-deoxyadenosine + L-methionine + 2 oxidized [2Fe-2S]-[ferredoxin] + S-adenosyl-L-homocysteine. In terms of biological role, specifically methylates position 2 of adenine 2503 in 23S rRNA and position 2 of adenine 37 in tRNAs. m2A2503 modification seems to play a crucial role in the proofreading step occurring at the peptidyl transferase center and thus would serve to optimize ribosomal fidelity. This chain is Dual-specificity RNA methyltransferase RlmN, found in Psychrobacter arcticus (strain DSM 17307 / VKM B-2377 / 273-4).